Here is a 281-residue protein sequence, read N- to C-terminus: Shikimate dehydrogenase (NADP(+)) (281 aa).

Residues 19–21 (SFS) and threonine 66 contribute to the shikimate site. Residue lysine 70 is the Proton acceptor of the active site. The shikimate site is built by asparagine 91 and aspartate 104. Residues 127–131 (GAGGA) and isoleucine 223 each bind NADP(+). Shikimate is bound at residue tyrosine 225. Glycine 246 provides a ligand contact to NADP(+).

The protein belongs to the shikimate dehydrogenase family. In terms of assembly, homodimer.

The catalysed reaction is shikimate + NADP(+) = 3-dehydroshikimate + NADPH + H(+). It functions in the pathway metabolic intermediate biosynthesis; chorismate biosynthesis; chorismate from D-erythrose 4-phosphate and phosphoenolpyruvate: step 4/7. Its function is as follows. Involved in the biosynthesis of the chorismate, which leads to the biosynthesis of aromatic amino acids. Catalyzes the reversible NADPH linked reduction of 3-dehydroshikimate (DHSA) to yield shikimate (SA). The chain is Shikimate dehydrogenase (NADP(+)) from Methanobrevibacter smithii (strain ATCC 35061 / DSM 861 / OCM 144 / PS).